The primary structure comprises 348 residues: Anthranilate phosphoribosyltransferase (348 aa).

Residues Gly-81, 84 to 85 (GD), Thr-89, 91 to 94 (NIST), 109 to 117 (KHGNRAMSS), and Ser-121 each bind 5-phospho-alpha-D-ribose 1-diphosphate. Gly-81 lines the anthranilate pocket. Residue Ser-93 coordinates Mg(2+). Asn-112 is an anthranilate binding site. Arg-167 is a binding site for anthranilate. Mg(2+) is bound by residues Asp-226 and Glu-227.

It belongs to the anthranilate phosphoribosyltransferase family. Homodimer. Mg(2+) serves as cofactor.

It carries out the reaction N-(5-phospho-beta-D-ribosyl)anthranilate + diphosphate = 5-phospho-alpha-D-ribose 1-diphosphate + anthranilate. It functions in the pathway amino-acid biosynthesis; L-tryptophan biosynthesis; L-tryptophan from chorismate: step 2/5. Its function is as follows. Catalyzes the transfer of the phosphoribosyl group of 5-phosphorylribose-1-pyrophosphate (PRPP) to anthranilate to yield N-(5'-phosphoribosyl)-anthranilate (PRA). This Thermomicrobium roseum (strain ATCC 27502 / DSM 5159 / P-2) protein is Anthranilate phosphoribosyltransferase.